A 395-amino-acid chain; its full sequence is E3 ubiquitin-protein ligase NHLRC1 (395 aa).

The RING-type zinc finger occupies 26-72 (CKVCFEKFGHRQQRRPRNLSCGHVVCLACVAALAHPRTLALECPFCR). 6 NHL repeats span residues 113-157 (ALTC…FDSG), 161-204 (AHQF…FDFF), 205-245 (GQIK…LDVD), 248-300 (EGVL…FSSS), 301-349 (MQLV…LGKP), and 350-393 (EEFP…YKVD).

In terms of assembly, interacts with AGL. Interacts (via the NHL repeats) with EPM2A/laforin. Forms a complex with EPM2A/laforin and HSP70. Interacts with PRDM8. As to expression, expressed in brain, cerebellum, spinal cord, medulla, heart, liver, skeletal muscle and pancreas.

The protein localises to the endoplasmic reticulum. It localises to the nucleus. The catalysed reaction is S-ubiquitinyl-[E2 ubiquitin-conjugating enzyme]-L-cysteine + [acceptor protein]-L-lysine = [E2 ubiquitin-conjugating enzyme]-L-cysteine + N(6)-ubiquitinyl-[acceptor protein]-L-lysine.. It participates in protein modification; protein ubiquitination. In terms of biological role, E3 ubiquitin-protein ligase. Together with the phosphatase EPM2A/laforin, appears to be involved in the clearance of toxic polyglucosan and protein aggregates via multiple pathways. In complex with EPM2A/laforin and HSP70, suppresses the cellular toxicity of misfolded proteins by promoting their degradation through the ubiquitin-proteasome system (UPS). Ubiquitinates the glycogen-targeting protein phosphatase subunits PPP1R3C/PTG and PPP1R3D in a laforin-dependent manner and targets them for proteasome-dependent degradation, thus decreasing glycogen accumulation. Polyubiquitinates EPM2A/laforin and ubiquitinates AGL and targets them for proteasome-dependent degradation. Also promotes proteasome-independent protein degradation through the macroautophagy pathway. This is E3 ubiquitin-protein ligase NHLRC1 (NHLRC1) from Homo sapiens (Human).